A 164-amino-acid chain; its full sequence is MKHLPKHVRPRWRYLAVGIEAWPDAGIERSDFQRALWFAAGNLLGDPGSADAGVRVVAYSFRDGRGEALVRARRGTVSRARAAVACVSAVREHPVRVCVRGVSGTMRAARERYLDGLDTPERRSDVAFDGDARDGVCRGENVDVVAGDDGWVGARRRDCGTDGE.

The protein belongs to the eukaryotic/archaeal RNase P protein component 2 family. As to quaternary structure, consists of a catalytic RNA component and at least 4-5 protein subunits.

Its subcellular location is the cytoplasm. It catalyses the reaction Endonucleolytic cleavage of RNA, removing 5'-extranucleotides from tRNA precursor.. Functionally, part of ribonuclease P, a protein complex that generates mature tRNA molecules by cleaving their 5'-ends. This chain is Ribonuclease P protein component 2, found in Halobacterium salinarum (strain ATCC 29341 / DSM 671 / R1).